The primary structure comprises 534 residues: MICLGIEGTAEKCGIGIVDSDGNILATCGCQLYPEVGGIHPREAANFHAEHIVPLIREALEESNLSINDIDLVSFAKGPGLGPALRTVATAARSLSQNIGVPLIGVNHCIGHVEIGKLTTGAKDPLTLYTSGGNTQIISYESGRYRIIGETLDIAIGNCLDQFSRDIGLGHPGGPIVEKHAENTNKTIELPYVVKGMDLSFSGILTSAINKYKQGVDLDVICNSFQQTCFAMLCEVTERAISYTGKNEVLLCGGVAANSKLRQMLQVMCEDHYVDFYMPPMKYCGDNGSMIARVGLLSYDENKCGIENSYINPKYRTDQVEVTWIKDNFQHNINLPDNIKEKGAEADIIEGIWDEREVIIKHRVKKKYRVDKLDEKLRLERTKEEAKLLSDCKKYGVTTPYIYSIDLNRKDIILEKIDAPKLHEIINTDKDIKKIFTNIGEMVFKMHEGEIIHGDLTTANILIKDDKPIFIDFGLGKYSNLLEDKGTDLLVFKKSLNTIIPEKSEELFNYFLNGYDNEDVIKKIDEIEKRGRYL.

The tract at residues 1 to 324 is kae1; that stretch reads MICLGIEGTA…YRTDQVEVTW (324 aa). Fe cation-binding residues include H108, H112, and Y129. L-threonylcarbamoyladenylate is bound by residues 129–133, D161, G174, E178, and N258; that span reads YTSGG. Fe cation is bound at residue D286. Residues 335-534 form the Protein kinase domain; that stretch reads LPDNIKEKGA…DEIEKRGRYL (200 aa). Residues 340–348 and K361 each bind ATP; that span reads KEKGAEADI. D455 serves as the catalytic Proton acceptor; for kinase activity.

In the N-terminal section; belongs to the KAE1 / TsaD family. This sequence in the C-terminal section; belongs to the protein kinase superfamily. Tyr protein kinase family. BUD32 subfamily. As to quaternary structure, component of the KEOPS complex that consists of Kae1, Bud32, Cgi121 and Pcc1; the whole complex dimerizes. Fe(2+) is required as a cofactor.

Its subcellular location is the cytoplasm. The enzyme catalyses L-seryl-[protein] + ATP = O-phospho-L-seryl-[protein] + ADP + H(+). The catalysed reaction is L-threonyl-[protein] + ATP = O-phospho-L-threonyl-[protein] + ADP + H(+). It carries out the reaction L-threonylcarbamoyladenylate + adenosine(37) in tRNA = N(6)-L-threonylcarbamoyladenosine(37) in tRNA + AMP + H(+). Functionally, required for the formation of a threonylcarbamoyl group on adenosine at position 37 (t(6)A37) in tRNAs that read codons beginning with adenine. Is a component of the KEOPS complex that is probably involved in the transfer of the threonylcarbamoyl moiety of threonylcarbamoyl-AMP (TC-AMP) to the N6 group of A37. The Kae1 domain likely plays a direct catalytic role in this reaction. The Bud32 domain probably displays kinase activity that regulates Kae1 function. The polypeptide is Probable bifunctional tRNA threonylcarbamoyladenosine biosynthesis protein (Methanosphaera stadtmanae (strain ATCC 43021 / DSM 3091 / JCM 11832 / MCB-3)).